The sequence spans 139 residues: Diuretic hormone 41 (139 aa).

An N-terminal signal peptide occupies residues 1–20; the sequence is MMWWALWCAVVVAAGSGVAA. The propeptide occupies 21 to 79; it reads APAPDSLSPLDMVQMDSSAPDDETLYAMSPMAARYSAGAPWLYLLADMPRDSQTGSGRV. The residue at position 122 (Ile-122) is an Isoleucine amide.

It belongs to the sauvagine/corticotropin-releasing factor/urotensin I family. In terms of tissue distribution, expressed in corpora cardiaca (CC), corpora allata (CA), antennal lobe (AL) and gnathal ganglion (GNG) (at protein level). Expression in CC and CA detected in all animals, in GNG in most animals, expression in AL detected in few animals (at protein level).

The protein resides in the secreted. Functionally, regulation of fluid secretion. This is Diuretic hormone 41 from Agrotis ipsilon (Black cutworm moth).